The sequence spans 98 residues: Large ribosomal subunit protein uL23 (98 aa).

Belongs to the universal ribosomal protein uL23 family. Part of the 50S ribosomal subunit. Contacts protein L29, and trigger factor when it is bound to the ribosome.

One of the early assembly proteins it binds 23S rRNA. One of the proteins that surrounds the polypeptide exit tunnel on the outside of the ribosome. Forms the main docking site for trigger factor binding to the ribosome. This is Large ribosomal subunit protein uL23 from Sorangium cellulosum (strain So ce56) (Polyangium cellulosum (strain So ce56)).